A 742-amino-acid chain; its full sequence is Phosphoribosylformylglycinamidine synthase subunit PurL (742 aa).

H54 is a catalytic residue. Residues Y57 and K96 each contribute to the ATP site. E98 contacts Mg(2+). Residues 99–102 (SHNH) and R121 each bind substrate. H100 functions as the Proton acceptor in the catalytic mechanism. A Mg(2+)-binding site is contributed by D122. A substrate-binding site is contributed by Q245. D273 serves as a coordination point for Mg(2+). 317 to 319 (ESQ) lines the substrate pocket. Positions 500 and 537 each coordinate ATP. Residue N538 coordinates Mg(2+). S540 lines the substrate pocket.

Belongs to the FGAMS family. Monomer. Part of the FGAM synthase complex composed of 1 PurL, 1 PurQ and 2 PurS subunits.

Its subcellular location is the cytoplasm. The catalysed reaction is N(2)-formyl-N(1)-(5-phospho-beta-D-ribosyl)glycinamide + L-glutamine + ATP + H2O = 2-formamido-N(1)-(5-O-phospho-beta-D-ribosyl)acetamidine + L-glutamate + ADP + phosphate + H(+). Its pathway is purine metabolism; IMP biosynthesis via de novo pathway; 5-amino-1-(5-phospho-D-ribosyl)imidazole from N(2)-formyl-N(1)-(5-phospho-D-ribosyl)glycinamide: step 1/2. Part of the phosphoribosylformylglycinamidine synthase complex involved in the purines biosynthetic pathway. Catalyzes the ATP-dependent conversion of formylglycinamide ribonucleotide (FGAR) and glutamine to yield formylglycinamidine ribonucleotide (FGAM) and glutamate. The FGAM synthase complex is composed of three subunits. PurQ produces an ammonia molecule by converting glutamine to glutamate. PurL transfers the ammonia molecule to FGAR to form FGAM in an ATP-dependent manner. PurS interacts with PurQ and PurL and is thought to assist in the transfer of the ammonia molecule from PurQ to PurL. This is Phosphoribosylformylglycinamidine synthase subunit PurL from Geobacillus kaustophilus (strain HTA426).